The following is a 188-amino-acid chain: Acireductone dioxygenase (188 aa).

H97, H99, E103, and H141 together coordinate Fe(2+). Ni(2+) is bound by residues H97, H99, E103, and H141.

Belongs to the acireductone dioxygenase (ARD) family. Monomer. Fe(2+) serves as cofactor. Ni(2+) is required as a cofactor.

It catalyses the reaction 1,2-dihydroxy-5-(methylsulfanyl)pent-1-en-3-one + O2 = 3-(methylsulfanyl)propanoate + CO + formate + 2 H(+). The catalysed reaction is 1,2-dihydroxy-5-(methylsulfanyl)pent-1-en-3-one + O2 = 4-methylsulfanyl-2-oxobutanoate + formate + 2 H(+). The protein operates within amino-acid biosynthesis; L-methionine biosynthesis via salvage pathway; L-methionine from S-methyl-5-thio-alpha-D-ribose 1-phosphate: step 5/6. Functionally, catalyzes 2 different reactions between oxygen and the acireductone 1,2-dihydroxy-3-keto-5-methylthiopentene (DHK-MTPene) depending upon the metal bound in the active site. Fe-containing acireductone dioxygenase (Fe-ARD) produces formate and 2-keto-4-methylthiobutyrate (KMTB), the alpha-ketoacid precursor of methionine in the methionine recycle pathway. Ni-containing acireductone dioxygenase (Ni-ARD) produces methylthiopropionate, carbon monoxide and formate, and does not lie on the methionine recycle pathway. The polypeptide is Acireductone dioxygenase (Gluconobacter oxydans (strain 621H) (Gluconobacter suboxydans)).